Consider the following 276-residue polypeptide: Rhomboid protease GlpG (276 aa).

6 helical membrane-spanning segments follow: residues 94–114, 142–162, 169–189, 192–212, 229–249, and 250–270; these read GPVTWIVMLACVVVYIAMSLI, IFMHFSLMHILFNLLWWWYLG, LGSGKLIVITVISALLSGYVQ, FSGPWFGGLSGVVYALMGYVW, LIIFALLWIVASWFDWFGMSM, and ANGAHIAGLIVGLAMAFVDTL. Residue S201 is the Nucleophile of the active site. Residue H254 is part of the active site.

Belongs to the peptidase S54 family.

It is found in the cell inner membrane. It catalyses the reaction Cleaves type-1 transmembrane domains using a catalytic dyad composed of serine and histidine that are contributed by different transmembrane domains.. Rhomboid-type serine protease that catalyzes intramembrane proteolysis. In Salmonella paratyphi A (strain ATCC 9150 / SARB42), this protein is Rhomboid protease GlpG.